The following is a 323-amino-acid chain: tRNA uridine(34) hydroxylase (323 aa).

The 95-residue stretch at 127 to 221 (QDENTVVLDA…YGQDPEVQGD (95 aa)) folds into the Rhodanese domain. Cys181 serves as the catalytic Cysteine persulfide intermediate.

Belongs to the TrhO family.

The catalysed reaction is uridine(34) in tRNA + AH2 + O2 = 5-hydroxyuridine(34) in tRNA + A + H2O. In terms of biological role, catalyzes oxygen-dependent 5-hydroxyuridine (ho5U) modification at position 34 in tRNAs. The sequence is that of tRNA uridine(34) hydroxylase from Oceanobacillus iheyensis (strain DSM 14371 / CIP 107618 / JCM 11309 / KCTC 3954 / HTE831).